A 151-amino-acid polypeptide reads, in one-letter code: UPF0178 protein Sde_3033 (151 aa).

It belongs to the UPF0178 family.

The polypeptide is UPF0178 protein Sde_3033 (Saccharophagus degradans (strain 2-40 / ATCC 43961 / DSM 17024)).